Consider the following 186-residue polypeptide: Adrenodoxin, mitochondrial (186 aa).

The transit peptide at 1 to 58 (MAVRLLRVASAALGDTAVRWQPLVGPRAGNRGPGGSIWLGLGGRAAAARTLSLSARAW) directs the protein to the mitochondrion. Ser-61 is subject to Phosphoserine. Lys-64 carries the post-translational modification N6-acetyllysine; alternate. Lys-64 bears the N6-succinyllysine; alternate mark. The region spanning 65–169 (ITVHFINRDG…NMTVRVPEAV (105 aa)) is the 2Fe-2S ferredoxin-type domain. Cys-104, Cys-110, Cys-113, and Cys-150 together coordinate [2Fe-2S] cluster. Lys-156 carries the post-translational modification N6-succinyllysine. Ser-175 is modified (phosphoserine).

Belongs to the adrenodoxin/putidaredoxin family. As to quaternary structure, interacts with CYP11A1. It depends on [2Fe-2S] cluster as a cofactor.

The protein resides in the mitochondrion matrix. In terms of biological role, essential for the synthesis of various steroid hormones. Participates in the reduction of mitochondrial cytochrome P450 for steroidogenesis. Transfers electrons from adrenodoxin reductase to CYP11A1, a cytochrome P450 that catalyzes cholesterol side-chain cleavage. Does not form a ternary complex with adrenodoxin reductase and CYP11A1 but shuttles between the two enzymes to transfer electrons. The polypeptide is Adrenodoxin, mitochondrial (FDX1) (Sus scrofa (Pig)).